A 283-amino-acid polypeptide reads, in one-letter code: Pantothenate synthetase (283 aa).

33–40 lines the ATP pocket; the sequence is MGALHEGH. His40 acts as the Proton donor in catalysis. (R)-pantoate is bound at residue Gln64. Gln64 contacts beta-alanine. 150–153 contributes to the ATP binding site; it reads GEKD. Gln156 serves as a coordination point for (R)-pantoate. ATP contacts are provided by residues Ile179 and 187 to 190; that span reads MSSR.

The protein belongs to the pantothenate synthetase family. In terms of assembly, homodimer.

The protein localises to the cytoplasm. The enzyme catalyses (R)-pantoate + beta-alanine + ATP = (R)-pantothenate + AMP + diphosphate + H(+). It participates in cofactor biosynthesis; (R)-pantothenate biosynthesis; (R)-pantothenate from (R)-pantoate and beta-alanine: step 1/1. Catalyzes the condensation of pantoate with beta-alanine in an ATP-dependent reaction via a pantoyl-adenylate intermediate. The polypeptide is Pantothenate synthetase (Mesorhizobium japonicum (strain LMG 29417 / CECT 9101 / MAFF 303099) (Mesorhizobium loti (strain MAFF 303099))).